The sequence spans 58 residues: Large ribosomal subunit protein eL37 (58 aa).

Positions 20, 23, 35, and 38 each coordinate Zn(2+). A C4-type zinc finger spans residues 20–38; it reads CRRCGEKSYHTKKKVCSSC.

The protein belongs to the eukaryotic ribosomal protein eL37 family. Requires Zn(2+) as cofactor.

In terms of biological role, binds to the 23S rRNA. This Haloquadratum walsbyi (strain DSM 16790 / HBSQ001) protein is Large ribosomal subunit protein eL37.